The primary structure comprises 349 residues: Soluble TNF receptor II (349 aa).

The N-terminal stretch at 1–19 is a signal peptide; the sequence is MKSVLYSYILFLSCIIING. TNFR-Cys repeat units follow at residues 31-65 and 67-108; these read KCKD…NTQC and PCGS…NRIC. 6 cysteine pairs are disulfide-bonded: Cys32–Cys43, Cys44–Cys57, Cys47–Cys65, Cys68–Cys83, Cys86–Cys100, and Cys90–Cys108. Residues Asn101, Asn189, and Asn248 are each glycosylated (N-linked (GlcNAc...) asparagine; by host).

This sequence belongs to the orthopoxvirus OPG002 family.

Inhibits host immune defense by binding to host TNF and various chemokines in the extracellular space. Binds host CC chemokines (beta chemokines) and CXC chemokines (alpha chemokines). The polypeptide is Soluble TNF receptor II (OPG002) (Camelus).